The primary structure comprises 148 residues: Receptor activity-modifying protein 1 (148 aa).

Residues 1–26 form the signal peptide; sequence MAPGLRGLPRRGLWLLLAHHLFMVTA. Disulfide bonds link Cys27/Cys82, Cys40/Cys72, and Cys57/Cys104. Residues 27-118 are Extracellular-facing; sequence CRDPDYGTLI…RALRDPPNSI (92 aa). Residues 119–140 traverse the membrane as a helical segment; that stretch reads LCPFIVLPITVTLLMTALVVWR. Residues 141-148 lie on the Cytoplasmic side of the membrane; the sequence is SKRTEGIV.

The protein belongs to the RAMP family. As to quaternary structure, heterodimer of CALCRL and RAMP1; the interaction induces allosteric modulation of CALCRL function and CGRP1/CALCA and CGRP2/CALCB ligand specificity. Heterodimer of CALCR and RAMP1; interaction forms the AMYR1 receptor complex for amylin/IAPP and CGRP1/CALCA ligands.

The protein localises to the cell membrane. Accessory protein that interacts with and modulates the function of G-protein coupled receptors including calcitonin gene-related peptide type 1 receptor (CALCRL) and calcitonin receptor (CALCR). Required for the transport of CALCRL to the plasma membrane. Together with CALCRL, form the receptor complex for the calcitonin gene-related peptides CGRP1/CALCA and CGRP2/CALCB. Together with CALCR, form the AMYR1 receptor complex for amylin/IAPP and CGRP1/CALCA. The sequence is that of Receptor activity-modifying protein 1 from Rattus norvegicus (Rat).